The chain runs to 338 residues: CRISPR-associated endonuclease Cas1 (338 aa).

Mn(2+) contacts are provided by Glu-155, His-220, and Glu-235.

Belongs to the CRISPR-associated endonuclease Cas1 family. Homodimer, forms a heterotetramer with a Cas2 homodimer. Requires Mg(2+) as cofactor. It depends on Mn(2+) as a cofactor.

CRISPR (clustered regularly interspaced short palindromic repeat), is an adaptive immune system that provides protection against mobile genetic elements (viruses, transposable elements and conjugative plasmids). CRISPR clusters contain spacers, sequences complementary to antecedent mobile elements, and target invading nucleic acids. CRISPR clusters are transcribed and processed into CRISPR RNA (crRNA). Acts as a dsDNA endonuclease. Involved in the integration of spacer DNA into the CRISPR cassette. The type III-A Csm effector complex binds crRNA and acts as a crRNA-guided RNase, DNase and cyclic oligoadenylate synthase; binding of target RNA cognate to the crRNA is required for all activities. The protein is CRISPR-associated endonuclease Cas1 of Mycobacterium tuberculosis (strain CDC 1551 / Oshkosh).